Consider the following 231-residue polypeptide: Large ribosomal subunit protein uL1 (231 aa).

Belongs to the universal ribosomal protein uL1 family. In terms of assembly, part of the 50S ribosomal subunit.

Binds directly to 23S rRNA. The L1 stalk is quite mobile in the ribosome, and is involved in E site tRNA release. In terms of biological role, protein L1 is also a translational repressor protein, it controls the translation of the L11 operon by binding to its mRNA. The chain is Large ribosomal subunit protein uL1 from Hydrogenovibrio crunogenus (strain DSM 25203 / XCL-2) (Thiomicrospira crunogena).